A 92-amino-acid chain; its full sequence is PqqA binding protein (92 aa).

It belongs to the PqqD family. In terms of assembly, monomer. Interacts with PqqE.

It participates in cofactor biosynthesis; pyrroloquinoline quinone biosynthesis. Functionally, functions as a PqqA binding protein and presents PqqA to PqqE, in the pyrroloquinoline quinone (PQQ) biosynthetic pathway. This is PqqA binding protein from Pseudomonas paraeruginosa (strain DSM 24068 / PA7) (Pseudomonas aeruginosa (strain PA7)).